A 333-amino-acid polypeptide reads, in one-letter code: Anthranilate phosphoribosyltransferase (333 aa).

Residues Gly-81, 84 to 85 (GD), Thr-89, 91 to 94 (NIST), 109 to 117 (KHGNRSVSS), and Ala-121 contribute to the 5-phospho-alpha-D-ribose 1-diphosphate site. Position 81 (Gly-81) interacts with anthranilate. Mg(2+) is bound at residue Ser-93. Position 112 (Asn-112) interacts with anthranilate. Residue Arg-167 participates in anthranilate binding. Residues Asp-225 and Glu-226 each coordinate Mg(2+).

It belongs to the anthranilate phosphoribosyltransferase family. As to quaternary structure, homodimer. Requires Mg(2+) as cofactor.

The catalysed reaction is N-(5-phospho-beta-D-ribosyl)anthranilate + diphosphate = 5-phospho-alpha-D-ribose 1-diphosphate + anthranilate. It participates in amino-acid biosynthesis; L-tryptophan biosynthesis; L-tryptophan from chorismate: step 2/5. Its function is as follows. Catalyzes the transfer of the phosphoribosyl group of 5-phosphorylribose-1-pyrophosphate (PRPP) to anthranilate to yield N-(5'-phosphoribosyl)-anthranilate (PRA). The polypeptide is Anthranilate phosphoribosyltransferase (Haemophilus influenzae (strain PittGG)).